The sequence spans 424 residues: S-inosyl-L-homocysteine hydrolase (424 aa).

Substrate-binding residues include aspartate 130 and glutamate 155. NAD(+) is bound at residue 156 to 158; sequence TTT. Positions 185 and 189 each coordinate substrate. NAD(+) is bound by residues asparagine 190, 219–224, glutamate 242, asparagine 277, 298–300, and asparagine 346; these read GYGWCG and AGH.

The protein belongs to the adenosylhomocysteinase family. Requires NAD(+) as cofactor.

Its subcellular location is the cytoplasm. The catalysed reaction is S-inosyl-L-homocysteine + H2O = L-homocysteine + inosine. It participates in amino-acid biosynthesis; S-adenosyl-L-methionine biosynthesis. Functionally, catalyzes the hydrolysis of S-inosyl-L-homocysteine (SIH) to L-homocysteine (Hcy) and inosine. Likely functions in a S-adenosyl-L-methionine (SAM) recycling pathway from S-adenosyl-L-homocysteine (SAH) produced from SAM-dependent methylation reactions. Can also catalyze the reverse reaction in vitro, i.e. the synthesis of SIH from Hcy and inosine. The protein is S-inosyl-L-homocysteine hydrolase of Methanopyrus kandleri (strain AV19 / DSM 6324 / JCM 9639 / NBRC 100938).